The sequence spans 499 residues: ADP,ATP carrier protein 5 (499 aa).

Transmembrane regions (helical) follow at residues L25–L45, I61–Y81, I93–Y113, Y148–W168, F183–M203, I223–L243, L286–V306, L327–M347, A356–F376, I380–G400, and L468–V488.

Belongs to the ADP/ATP translocase tlc family.

Its subcellular location is the cell membrane. Its function is as follows. Provides the rickettsial cell with host ATP in exchange for rickettsial ADP. This is an obligate exchange system. This energy acquiring activity is an important component of rickettsial parasitism. The polypeptide is ADP,ATP carrier protein 5 (tlcE) (Rickettsia conorii (strain ATCC VR-613 / Malish 7)).